The following is a 1914-amino-acid chain: COPII coat assembly protein sec16 (1914 aa).

2 disordered regions span residues 1 to 31 (MAQS…ASLE) and 58 to 294 (IAFP…TRKS). Positions 110 to 130 (SYDHETPNLDAPQTEHAHDNE) are enriched in basic and acidic residues. Composition is skewed to polar residues over residues 142 to 160 (TEAQ…TEAT) and 285 to 294 (QPASHITRKS). A run of 4 repeats spans residues 315 to 341 (PAAQ…FEED), 342 to 368 (PAAQ…SEED), 369 to 395 (PAAQ…FEED), and 396 to 422 (PAAQ…SEED). Residues 315-422 (PAAQEFDNAL…TVRKSSSEED (108 aa)) are 4 X 27 AA approximate tandem repeats. The tract at residues 352 to 376 (AAAATDNSADKPSSEEDPAAQELDN) is disordered. Disordered stretches follow at residues 469–873 (TAEH…PPGY), 1506–1568 (PSYS…MYQG), 1600–1763 (APQA…LGEE), and 1776–1914 (VNKK…VMAK). Over residues 512–521 (TPHQPSTSDL) the composition is skewed to polar residues. Positions 526-540 (PVPGAAPPANMAASA) are enriched in low complexity. A compositionally biased stretch (basic and acidic residues) spans 558 to 567 (SFAERAKEGY). Composition is skewed to pro residues over residues 596-621 (STPP…PPLG) and 671-680 (SSHPPPPPAN). A compositionally biased stretch (low complexity) spans 709–721 (PYASLSAPGASSG). Over residues 743–763 (KPPPSPRYSPAPPPATAPPPR) the composition is skewed to pro residues. Composition is skewed to polar residues over residues 849 to 860 (MGSSVHQMSQQP) and 1506 to 1528 (PSYS…SSPE). The span at 1532–1543 (GRSSLDSQRSSS) shows a compositional bias: low complexity. Over residues 1555 to 1566 (QEPSTPVESNMY) the composition is skewed to polar residues. The segment covering 1702–1724 (KAERARKDREADEAFRKAAEADA) has biased composition (basic and acidic residues). Composition is skewed to low complexity over residues 1725 to 1736 (QKPAPAKKSWFG) and 1798 to 1809 (GPPSRTASGSSA). Residues 1810–1827 (APPPPASASPMMPPPSSR) are compositionally biased toward pro residues. The span at 1852-1866 (IQRSVSTGAAVSTPP) shows a compositional bias: polar residues.

It belongs to the SEC16 family.

It localises to the endoplasmic reticulum membrane. Its function is as follows. Involved in the initiation of assembly of the COPII coat required for the formation of transport vesicles from the endoplasmic reticulum (ER) and the selection of cargo molecules. Also involved in autophagy. The sequence is that of COPII coat assembly protein sec16 (sec16) from Aspergillus niger (strain ATCC MYA-4892 / CBS 513.88 / FGSC A1513).